Here is a 209-residue protein sequence, read N- to C-terminus: Large ribosomal subunit protein uL3 (209 aa).

An N5-methylglutamine modification is found at Q150.

It belongs to the universal ribosomal protein uL3 family. Part of the 50S ribosomal subunit. Forms a cluster with proteins L14 and L19. In terms of processing, methylated by PrmB.

In terms of biological role, one of the primary rRNA binding proteins, it binds directly near the 3'-end of the 23S rRNA, where it nucleates assembly of the 50S subunit. The polypeptide is Large ribosomal subunit protein uL3 (Klebsiella pneumoniae (strain 342)).